Here is a 1390-residue protein sequence, read N- to C-terminus: DNA-directed RNA polymerase subunit beta' (1390 aa).

Positions 70, 72, 85, and 88 each coordinate Zn(2+). Residues D460, D462, and D464 each contribute to the Mg(2+) site. Zn(2+) is bound by residues C814, C888, C895, and C898.

Belongs to the RNA polymerase beta' chain family. As to quaternary structure, the RNAP catalytic core consists of 2 alpha, 1 beta, 1 beta' and 1 omega subunit. When a sigma factor is associated with the core the holoenzyme is formed, which can initiate transcription. Mg(2+) is required as a cofactor. It depends on Zn(2+) as a cofactor.

The catalysed reaction is RNA(n) + a ribonucleoside 5'-triphosphate = RNA(n+1) + diphosphate. DNA-dependent RNA polymerase catalyzes the transcription of DNA into RNA using the four ribonucleoside triphosphates as substrates. This chain is DNA-directed RNA polymerase subunit beta', found in Pseudoalteromonas translucida (strain TAC 125).